The primary structure comprises 481 residues: Hyaluronidase-4 (481 aa).

Topologically, residues 1 to 8 are cytoplasmic; it reads MKVLSEGQ. Residues 9–29 traverse the membrane as a helical segment; that stretch reads LKLCVVQPVHLTSWLLIFFIL. Residues 30–453 lie on the Extracellular side of the membrane; sequence KSISCLKPAR…ADCREIKTAD (424 aa). Disulfide bonds link cysteine 59-cysteine 351, cysteine 223-cysteine 237, cysteine 376-cysteine 387, cysteine 381-cysteine 435, and cysteine 437-cysteine 446. 2 N-linked (GlcNAc...) asparagine glycosylation sites follow: asparagine 86 and asparagine 115. Glutamate 147 (proton donor) is an active-site residue. Asparagine 177 carries N-linked (GlcNAc...) (complex) asparagine glycosylation. Asparagine 343 carries an N-linked (GlcNAc...) asparagine glycan. A helical transmembrane segment spans residues 454-474; the sequence is GCSGVSPSPGSLMTLCLLLLA. The Cytoplasmic portion of the chain corresponds to 475–481; it reads SYRSIQL.

This sequence belongs to the glycosyl hydrolase 56 family. As to expression, detected in placenta and skeletal muscle.

The protein localises to the membrane. The enzyme catalyses Random hydrolysis of (1-&gt;4)-linkages between N-acetyl-beta-D-glucosamine and D-glucuronate residues in hyaluronate.. Its function is as follows. Endo-hyaluronidase that degrades hyaluronan to smaller oligosaccharide fragments. Also has chondroitin sulfate hydrolase activity, The best substrate being the galactosaminidic linkage in the sequence of a trisulfated tetrasaccharide. The protein is Hyaluronidase-4 (HYAL4) of Homo sapiens (Human).